A 193-amino-acid polypeptide reads, in one-letter code: Holliday junction branch migration complex subunit RuvA (193 aa).

Residues 1–64 form a domain I region; sequence MIGRIAGTLL…EDAHLLYGFL (64 aa). The tract at residues 65–139 is domain II; the sequence is TPPERSTFRE…GKLGADLGPL (75 aa). Positions 139 to 143 are flexible linker; the sequence is LAGAA. Residues 144-193 are domain III; the sequence is SPSDHATDILNALVALGYSEKEALAAIKNVPAGTGVSEGIKLSLKALSKA.

This sequence belongs to the RuvA family. Homotetramer. Forms an RuvA(8)-RuvB(12)-Holliday junction (HJ) complex. HJ DNA is sandwiched between 2 RuvA tetramers; dsDNA enters through RuvA and exits via RuvB. An RuvB hexamer assembles on each DNA strand where it exits the tetramer. Each RuvB hexamer is contacted by two RuvA subunits (via domain III) on 2 adjacent RuvB subunits; this complex drives branch migration. In the full resolvosome a probable DNA-RuvA(4)-RuvB(12)-RuvC(2) complex forms which resolves the HJ.

It is found in the cytoplasm. The RuvA-RuvB-RuvC complex processes Holliday junction (HJ) DNA during genetic recombination and DNA repair, while the RuvA-RuvB complex plays an important role in the rescue of blocked DNA replication forks via replication fork reversal (RFR). RuvA specifically binds to HJ cruciform DNA, conferring on it an open structure. The RuvB hexamer acts as an ATP-dependent pump, pulling dsDNA into and through the RuvAB complex. HJ branch migration allows RuvC to scan DNA until it finds its consensus sequence, where it cleaves and resolves the cruciform DNA. This is Holliday junction branch migration complex subunit RuvA from Burkholderia mallei (strain NCTC 10229).